Reading from the N-terminus, the 657-residue chain is Hemocyanin B chain (657 aa).

Residues cysteine 93 and cysteine 98 are joined by a disulfide bond. A glycan (N-linked (GlcNAc...) asparagine) is linked at asparagine 167. Histidine 194, histidine 198, histidine 224, histidine 344, histidine 348, and histidine 384 together coordinate Cu cation. Cystine bridges form between cysteine 483-cysteine 502 and cysteine 562-cysteine 609.

It belongs to the tyrosinase family. Hemocyanin subfamily. As to quaternary structure, hexamer of a number of different chains, of which A, B, and C have been identified. Hemolymph.

It is found in the secreted. It localises to the extracellular space. Functionally, hemocyanins are copper-containing oxygen carriers occurring freely dissolved in the hemolymph of many mollusks and arthropods. This is Hemocyanin B chain from Panulirus interruptus (California spiny lobster).